Here is a 534-residue protein sequence, read N- to C-terminus: Inorganic phosphate transporter 1-6 (534 aa).

Residues Met-1–Ala-29 lie on the Cytoplasmic side of the membrane. A helical transmembrane segment spans residues Ile-30–Val-50. Residues Thr-51–Ser-75 lie on the Extracellular side of the membrane. A helical transmembrane segment spans residues Ala-76–Leu-96. Residues Gly-97–Arg-104 are Cytoplasmic-facing. The chain crosses the membrane as a helical span at residues Val-105–Gly-125. Topologically, residues His-126–Thr-127 are extracellular. A helical transmembrane segment spans residues Pro-128 to Gly-148. Topologically, residues Asp-149 to Ala-168 are cytoplasmic. The chain crosses the membrane as a helical span at residues Phe-169–Ile-189. The Extracellular segment spans residues Leu-190 to Ala-216. The chain crosses the membrane as a helical span at residues Asp-217–Trp-237. Residues Arg-238–Arg-294 lie on the Cytoplasmic side of the membrane. A helical membrane pass occupies residues His-295–Ser-315. Over Gln-316 to Thr-350 the chain is Extracellular. The chain crosses the membrane as a helical span at residues Leu-351–Val-371. Residues Gly-372 to Lys-375 are Cytoplasmic-facing. Residues Ile-376–His-396 form a helical membrane-spanning segment. Over His-397–His-405 the chain is Extracellular. A helical membrane pass occupies residues Val-406–Thr-426. The Cytoplasmic segment spans residues Thr-427–Gly-445. The chain crosses the membrane as a helical span at residues Ile-446–Ala-466. Topologically, residues Gln-467–Asn-486 are extracellular. A helical membrane pass occupies residues Ser-487–Glu-507. The Cytoplasmic segment spans residues Ser-508–Leu-534. Residues Glu-514–Leu-534 are disordered.

It belongs to the major facilitator superfamily. Phosphate:H(+) symporter (TC 2.A.1.9) family. As to expression, highly expressed in leaves and at low levels in roots. Expressed in leaf xylem parenchyma cells.

The protein localises to the membrane. Its function is as follows. High-affinity transporter for external inorganic phosphate (Pi). Probably involved in Pi uptake, translocation and internal transport throughout the plant. The polypeptide is Inorganic phosphate transporter 1-6 (PHT1-6) (Oryza sativa subsp. japonica (Rice)).